Reading from the N-terminus, the 127-residue chain is Large-conductance mechanosensitive channel (127 aa).

3 helical membrane-spanning segments follow: residues 9 to 29 (EFAMRGNVIDLAVAVVMGVAF), 32 to 52 (IVTALVDGIIMPCVGLLLGGI), and 75 to 95 (VIDFIIVAFAIFVLIKLINLL).

Belongs to the MscL family. In terms of assembly, homopentamer.

The protein localises to the cell inner membrane. Its function is as follows. Channel that opens in response to stretch forces in the membrane lipid bilayer. May participate in the regulation of osmotic pressure changes within the cell. The polypeptide is Large-conductance mechanosensitive channel (Legionella pneumophila (strain Paris)).